The following is an 81-amino-acid chain: UPF0248 protein SSO2687 (81 aa).

Belongs to the UPF0248 family.

In Saccharolobus solfataricus (strain ATCC 35092 / DSM 1617 / JCM 11322 / P2) (Sulfolobus solfataricus), this protein is UPF0248 protein SSO2687.